We begin with the raw amino-acid sequence, 82 residues long: Sigma-G-dependent sporulation-specific SASP protein (82 aa).

The chain is Sigma-G-dependent sporulation-specific SASP protein from Bacillus subtilis (strain 168).